The following is a 293-amino-acid chain: Aspartate carbamoyltransferase catalytic subunit (293 aa).

Arg50 and Thr51 together coordinate carbamoyl phosphate. An L-aspartate-binding site is contributed by Lys78. Carbamoyl phosphate-binding residues include Arg100, His127, and Gln130. L-aspartate-binding residues include Arg160 and Arg210. Ala253 and Pro254 together coordinate carbamoyl phosphate.

The protein belongs to the aspartate/ornithine carbamoyltransferase superfamily. ATCase family. Heterododecamer (2C3:3R2) of six catalytic PyrB chains organized as two trimers (C3), and six regulatory PyrI chains organized as three dimers (R2).

It carries out the reaction carbamoyl phosphate + L-aspartate = N-carbamoyl-L-aspartate + phosphate + H(+). It functions in the pathway pyrimidine metabolism; UMP biosynthesis via de novo pathway; (S)-dihydroorotate from bicarbonate: step 2/3. Catalyzes the condensation of carbamoyl phosphate and aspartate to form carbamoyl aspartate and inorganic phosphate, the committed step in the de novo pyrimidine nucleotide biosynthesis pathway. The chain is Aspartate carbamoyltransferase catalytic subunit from Staphylococcus epidermidis (strain ATCC 35984 / DSM 28319 / BCRC 17069 / CCUG 31568 / BM 3577 / RP62A).